Here is a 95-residue protein sequence, read N- to C-terminus: MASSHWNETTTSVYQYLGFQVQKIYPFHDNWNTACFVILLLFIFTVVSLVVLAFLYEVLDCCCCVKNKTVKDLKSEPNPLRSMMDNIRKRETEVV.

Residues 35–55 (CFVILLLFIFTVVSLVVLAFL) traverse the membrane as a helical segment.

The protein localises to the membrane. The chain is Small integral membrane protein 18 (SMIM18) from Homo sapiens (Human).